The chain runs to 491 residues: Serine hydroxymethyltransferase (491 aa).

Residues Leu173 and Gly177 to Leu179 contribute to the (6S)-5,6,7,8-tetrahydrofolate site. Position 285 is an N6-(pyridoxal phosphate)lysine (Lys285).

This sequence belongs to the SHMT family. As to quaternary structure, homodimer. Requires pyridoxal 5'-phosphate as cofactor.

Its subcellular location is the cytoplasm. It catalyses the reaction (6R)-5,10-methylene-5,6,7,8-tetrahydrofolate + glycine + H2O = (6S)-5,6,7,8-tetrahydrofolate + L-serine. The protein operates within one-carbon metabolism; tetrahydrofolate interconversion. It functions in the pathway amino-acid biosynthesis; glycine biosynthesis; glycine from L-serine: step 1/1. Functionally, catalyzes the reversible interconversion of serine and glycine with tetrahydrofolate (THF) serving as the one-carbon carrier. This reaction serves as the major source of one-carbon groups required for the biosynthesis of purines, thymidylate, methionine, and other important biomolecules. Also exhibits THF-independent aldolase activity toward beta-hydroxyamino acids, producing glycine and aldehydes, via a retro-aldol mechanism. This is Serine hydroxymethyltransferase from Cutibacterium acnes (strain DSM 16379 / KPA171202) (Propionibacterium acnes).